Consider the following 64-residue polypeptide: Large ribosomal subunit protein bL35c (64 aa).

This sequence belongs to the bacterial ribosomal protein bL35 family.

The protein resides in the plastid. It localises to the chloroplast. In Trieres chinensis (Marine centric diatom), this protein is Large ribosomal subunit protein bL35c.